A 349-amino-acid polypeptide reads, in one-letter code: MSKSKDDAPHELESQFILRLPPEYASTVRRAVQSGHVNLKDRLTIELHPDGRHGIVRVDRVPLASKLVDLPCVMESLKTIDKKTFYKTADICQMLVSTVDGDLYPPVEEPVASTDPKASKKKDKDKEKKFIWNHGITLPLKNVRKRRFRKTAKKKYIESPDVEKEVKRLLSTDAEAVSTRWEIIAEDETKEAENQGLDISSPGMSGHRQGHDSLEHDELREIFNDLSSSSEDEDETQHQDEEDINIIDTEEDLERQLQDKLNESDEQHQENEGTNQLVMGIQKQIDNMKGKLQETQDRAKRQEDLIMKVENLALKNRFQAVLDELKQKEDREKEQLSSLQEELESLLEK.

The [KR]-[STA]-K motif signature appears at 3 to 5 (KSK). The interval 105–126 (PPVEEPVASTDPKASKKKDKDK) is disordered. A phosphoserine mark is found at Ser-171, Ser-200, Ser-201, and Ser-213. A disordered region spans residues 186–212 (EDETKEAENQGLDISSPGMSGHRQGHD). The segment at 227-247 (SSSSEDEDETQHQDEEDINII) is disordered. The span at 230-247 (SEDEDETQHQDEEDINII) shows a compositional bias: acidic residues. The stretch at 244–349 (INIIDTEEDL…QEELESLLEK (106 aa)) forms a coiled coil. Position 264 is a phosphoserine (Ser-264). Residues 328–349 (KEDREKEQLSSLQEELESLLEK) are disordered.

This sequence belongs to the TAF7 family. As to quaternary structure, component of the TFIID basal transcription factor complex, composed of TATA-box-binding protein TBP, and a number of TBP-associated factors (TAFs), including TAF1, TAF2, TAF3, TAF4, TAF5, TAF6, TAF7, TAF8, TAF9, TAF10, TAF11, TAF12 and TAF13. Part of a TFIID-containing RNA polymerase II pre-initiation complex that is composed of TBP and at least GTF2A1, GTF2A2, GTF2E1, GTF2E2, GTF2F1, GTF2H2, GTF2H3, GTF2H4, GTF2H5, GTF2B, TCEA1, ERCC2, ERCC3, TAF1, TAF2, TAF3, TAF4, TAF5, TAF6, TAF7, TAF8, TAF9, TAF10, TAF11, TAF12 and TAF13. Interacts with TAF1; the interaction is direct. Interacts with TAF1, TAF5, TAF11, TAF12, and TAF13, but not with TAF10 or TBP. Component of some MLL1/MLL complex, at least composed of the core components KMT2A/MLL1, ASH2L, HCFC1/HCF1, WDR5 and RBBP5, as well as the facultative components BACC1, CHD8, E2F6, HSP70, INO80C, KANSL1, LAS1L, MAX, MCRS1, MGA, MYST1/MOF, PELP1, PHF20, PRP31, RING2, RUVB1/TIP49A, RUVB2/TIP49B, SENP3, TAF1, TAF4, TAF6, TAF7, TAF9 and TEX10. Interacts with CIITA and TAF1 and inhibits their acetyltransferase activity, and behaving as a repressor of CIITA- and TAF1-regulated promoters. Phosphorylated by CIITA. Phosphorylation at Ser-264 by TAF1 in early G1 phase disrupts binding to TAF1. Post-translationally, ubiquitinated by TRIM26; leading to proteasomal degradation. In terms of tissue distribution, ubiquitous.

The protein resides in the nucleus. The TFIID basal transcription factor complex plays a major role in the initiation of RNA polymerase II (Pol II)-dependent transcription. TFIID recognizes and binds promoters with or without a TATA box via its subunit TBP, a TATA-box-binding protein, and promotes assembly of the pre-initiation complex (PIC). The TFIID complex consists of TBP and TBP-associated factors (TAFs), including TAF1, TAF2, TAF3, TAF4, TAF5, TAF6, TAF7, TAF8, TAF9, TAF10, TAF11, TAF12 and TAF13. TAF7 forms a promoter DNA binding subcomplex of TFIID, together with TAF1 and TAF2. Part of a TFIID complex containing TAF10 (TFIID alpha) and a TFIID complex lacking TAF10 (TFIID beta). This Homo sapiens (Human) protein is Transcription initiation factor TFIID subunit 7 (TAF7).